The primary structure comprises 259 residues: Ras-related protein Rab-34 (259 aa).

Methionine 1 carries the N-acetylmethionine modification. Positions 62, 63, 64, 65, 66, 78, 81, and 84 each coordinate GTP. Mg(2+) is bound at residue threonine 66. Positions 71 to 89 (RFCKDTFDKNYKATIGVDF) match the Switch 1 motif. Residues threonine 84 and aspartate 107 each contribute to the Mg(2+) site. Positions 108–127 (TAGQERFKCIASTYYRGAQA) match the Switch 2 motif. Residues glycine 110, lysine 167, aspartate 169, and serine 198 each contribute to the GTP site. Serine 241 and serine 244 each carry phosphoserine. Residues cysteine 257 and cysteine 258 are each lipidated (S-geranylgeranyl cysteine).

The protein belongs to the small GTPase superfamily. Rab family. Interacts with RILP. The GTP-bound form interacts with REP15. It depends on Mg(2+) as a cofactor.

It is found in the cytoplasm. Its subcellular location is the golgi apparatus. The protein localises to the cytoplasmic vesicle. The protein resides in the phagosome. It localises to the phagosome membrane. It is found in the cell projection. Its subcellular location is the cilium. The protein localises to the cytoskeleton. The protein resides in the microtubule organizing center. It localises to the centrosome. It is found in the centriole. The catalysed reaction is GTP + H2O = GDP + phosphate + H(+). Regulated by guanine nucleotide exchange factors (GEFs) which promote the exchange of bound GDP for free GTP. Regulated by GTPase activating proteins (GAPs) which increase the GTP hydrolysis activity. Inhibited by GDP dissociation inhibitors (GDIs). Functionally, the small GTPases Rab are key regulators of intracellular membrane trafficking, from the formation of transport vesicles to their fusion with membranes. Rabs cycle between an inactive GDP-bound form and an active GTP-bound form that is able to recruit to membranes different sets of downstream effectors directly responsible for vesicle formation, movement, tethering and fusion. RAB34 transports protein involved in the redistribution of lysosomes to the peri-Golgi region. Plays a role in the maturation of phagosomes that engulf pathogens, such as S.aureus and M.tuberculosis. Plays a role in the fusion of phagosomes with lysosomes. Required for the early steps of intracellular ciliogenesis, the cilium assembly pathway initiated by trafficking and docking of ciliary vesicles to the centrioles in the cytoplasm, followed by axoneme formation in the cytoplasm. After axoneme elongation, the centrioles migrate close to the cell surface so that ciliary vesicles can fuse with the plasma membrane to expose cilia to the extracellular space. It seems dispensable for ciliogenesis via the extracellular pathway where cilium assembly begins after migration and docking of the centriole to the plasma membrane. Also acts as a positive regulator of hedgehog signaling and regulates ciliary function. In Sus scrofa (Pig), this protein is Ras-related protein Rab-34 (RAB34).